Here is a 547-residue protein sequence, read N- to C-terminus: MLSLTAHDIPWAAGATLLAWAAYKIGRILLLPYTSPLRGLPGPPASSWLFGNVNELMGTEDFALYSEWLEKYGPTMKLNSWFKIPKLFTIDTRAMNYVLSHSQEYPKPERSRHNLVQILGNGLVVAEGELHRRERRIMNPAFGPAQIRELTEIFVEKSQQLRDIWWNDVAIRGGSARIDIQSGLTKMTLDVIGLAGFNYEFNALNPDGKPNELNAAFEVMFEYLSNLRKSYWLIIRSRFPILRCIPDGYSRRTAAAHKVTRRIGLQLIAEKKAALKQMAQSGEKTAGTALKSRDLLTLLIKANTSPDIPEDQRLSDEDVLAQVPTFLVAGHETTSNATTWCLYALAQRLDVQRKLREELREVPVDNPSMDQLNALPYLDAVIRETMRLYPPVVAGIRIASKDDEIPLAVPYMDAHGRMHDTVRIDKGTTFPIPILGVNMSKALWGEDAREFKPERWESVPEAVQPIPGVWSNLMTFIGGPRACIGYRFSLVEMKALIFTLVRAFEFEMAVPIEDITRKIGLVQRPFVRSEMEKGTQMPLIVKQHVRL.

Residues 9–25 traverse the membrane as a helical segment; that stretch reads IPWAAGATLLAWAAYKI. N-linked (GlcNAc...) asparagine glycans are attached at residues Asn336 and Asn438. Cys483 provides a ligand contact to heme.

It belongs to the cytochrome P450 family. The cofactor is heme.

The protein localises to the membrane. It participates in secondary metabolite biosynthesis. In terms of biological role, cytochrome P450 monooxygenase that is able to use 7-ethoxycoumarin and testosterone as substrates for oxidation. This Postia placenta (strain ATCC 44394 / Madison 698-R) (Brown rot fungus) protein is Cytochrome P450 monooxygenase 128.